The chain runs to 183 residues: Glutathione-regulated potassium-efflux system ancillary protein KefG (183 aa).

Belongs to the NAD(P)H dehydrogenase (quinone) family. KefG subfamily. Interacts with KefB.

It is found in the cell inner membrane. It carries out the reaction a quinone + NADH + H(+) = a quinol + NAD(+). The catalysed reaction is a quinone + NADPH + H(+) = a quinol + NADP(+). Regulatory subunit of a potassium efflux system that confers protection against electrophiles. Required for full activity of KefB. The polypeptide is Glutathione-regulated potassium-efflux system ancillary protein KefG (Salmonella paratyphi C (strain RKS4594)).